We begin with the raw amino-acid sequence, 465 residues long: L-cystine uptake protein TcyP (465 aa).

10 helical membrane passes run 3-23 (LFLT…LFYM), 34-54 (VLLA…FFAP), 73-93 (YVRF…LSAF), 105-125 (ISAL…AIGI), 184-204 (PTSA…YLGV), 224-246 (AIIM…AIMT), 263-283 (FVLA…IILA), 338-358 (LSIG…VMIA), 370-390 (FILL…GVGG), and 394-414 (FAAI…GLLI).

The protein belongs to the dicarboxylate/amino acid:cation symporter (DAACS) (TC 2.A.23) family.

It localises to the membrane. Mediates uptake of L-cystine, the oxidized form of L-cysteine. This Shouchella clausii (strain KSM-K16) (Alkalihalobacillus clausii) protein is L-cystine uptake protein TcyP.